Consider the following 675-residue polypeptide: Polyphosphate kinase (675 aa).

Residue Asn-42 coordinates ATP. 2 residues coordinate Mg(2+): Arg-372 and Arg-401. The active-site Phosphohistidine intermediate is His-431. Residues Tyr-464, Arg-558, and His-586 each contribute to the ATP site.

The protein belongs to the polyphosphate kinase 1 (PPK1) family. Mg(2+) is required as a cofactor. An intermediate of this reaction is the autophosphorylated ppk in which a phosphate is covalently linked to a histidine residue through a N-P bond.

The enzyme catalyses [phosphate](n) + ATP = [phosphate](n+1) + ADP. Its function is as follows. Catalyzes the reversible transfer of the terminal phosphate of ATP to form a long-chain polyphosphate (polyP). The chain is Polyphosphate kinase from Helicobacter pylori (strain ATCC 700392 / 26695) (Campylobacter pylori).